A 730-amino-acid chain; its full sequence is MSGVLNDVRDYTEGYLQVLWQNRLYVYSTAAVLIGVWFTVNMLFKKKKMVHPVSPLASKSVKKQEPASEAKKVIYVSGVKVFYGSQTGTAKGFAKELAEDVIAQGIQCEVIDMKDFDPEDRLAEECTSKIICVFLVATYTDGQPTESAEWFCKWLEEASTDFRYGKTYLKGMRYAVFGLGNSVYVGHFNTVSKSIDKWLWMLSAARIMTRGEGDCNVVKSRHGSVQADFQVWKGKFLNRLQALAKGEKKACSGNCKKASCKNKKKHKEEAEDNHSLAEKNNSEEELMESSSDEESSSEDEKSHGSVIDMEDLGNVMNHMKKAKQRMEEDEEDSQRVKQNGERKSECEEERREMITPALRDSLTKQGYKLIGSHSGVKLRRWTKSMLRGRGGCYKHTFYGIESHRCMETTPSLACANKCVFCWRHHTNPVGTEWRWKMDPAEKIIQEAMENHRNMIRQFRGVPGVRPERFEEGLTVKHCALSLVGEPIMYPEINSFLKLLHQQNISSFLVTNAQFPEEIRSLVPVTQLYVSVDASTKDSLKKIDRPLFKDFWQRFLDSLRALGEKQQRTVYRLTLVKAWNVDELKAYADLIALGQPDFIEVKGVTYCGESSASSLTMANVPWHEEVIYFVQQLANLLPDYEIACEHEHSNCLLLANHKFKVDGEWWTWIDYERFQELIQQYEESGGTKNFSAMDYMAKTPSWAVFGAGERGFDPTDTRFQRKNKTKDISGC.

One can recognise a Flavodoxin-like domain in the interval 79–237 (VKVFYGSQTG…DFQVWKGKFL (159 aa)). FMN is bound by residues 85-89 (SQTGT) and 176-208 (VFGL…ARIM). The interval 253 to 351 (GNCKKASCKN…RKSECEEERR (99 aa)) is disordered. Positions 267-282 (KEEAEDNHSLAEKNNS) are enriched in basic and acidic residues. Acidic residues predominate over residues 283–297 (EEELMESSSDEESSS). Basic and acidic residues predominate over residues 333–351 (SQRVKQNGERKSECEEERR). One can recognise a Radical SAM core domain in the interval 398–642 (YGIESHRCME…ANLLPDYEIA (245 aa)). [4Fe-4S] cluster contacts are provided by C414, C418, and C421.

This sequence belongs to the TYW1 family. It depends on [4Fe-4S] cluster as a cofactor.

It catalyses the reaction N(1)-methylguanosine(37) in tRNA(Phe) + pyruvate + S-adenosyl-L-methionine = 4-demethylwyosine(37) in tRNA(Phe) + 5'-deoxyadenosine + L-methionine + CO2 + H2O. Its pathway is tRNA modification; wybutosine-tRNA(Phe) biosynthesis. Probable component of the wybutosine biosynthesis pathway. Wybutosine is a hyper modified guanosine with a tricyclic base found at the 3'-position adjacent to the anticodon of eukaryotic phenylalanine tRNA. Catalyzes the condensation of N-methylguanine with 2 carbon atoms from pyruvate to form the tricyclic 4-demethylwyosine, an intermediate in wybutosine biosynthesis. This is S-adenosyl-L-methionine-dependent tRNA 4-demethylwyosine synthase TYW1 (tyw1) from Danio rerio (Zebrafish).